The chain runs to 235 residues: Orotidine 5'-phosphate decarboxylase (235 aa).

Substrate is bound by residues aspartate 12, lysine 34, 61–70 (DMKLLDIDNT), threonine 116, arginine 177, glutamine 186, and arginine 207. Lysine 63 acts as the Proton donor in catalysis.

The protein belongs to the OMP decarboxylase family. Type 1 subfamily. As to quaternary structure, homodimer.

The catalysed reaction is orotidine 5'-phosphate + H(+) = UMP + CO2. The protein operates within pyrimidine metabolism; UMP biosynthesis via de novo pathway; UMP from orotate: step 2/2. In terms of biological role, catalyzes the decarboxylation of orotidine 5'-monophosphate (OMP) to uridine 5'-monophosphate (UMP). The polypeptide is Orotidine 5'-phosphate decarboxylase (Rhizobium etli (strain CIAT 652)).